Reading from the N-terminus, the 341-residue chain is MSNCKFTLAQLADHLDAQMVGDANYTVECIAPLESAGKNALSFLANSKYEKALATSQAGIMLLAQDSAEKFNGNKLIVKNPYLCYAKLSELFNFRLAKKQGVHPSATVDADATVAADAYIGPNCVIEAGAVIGGGTQLGAGCFVGADTKLGNNCLLHANVTLYAGVELGNKVLIHSGTVIGSDGFGFAPSAEGWVKIHQLGGVVIGNNVEIGSNTSIDRGALDDTIIEDGVIIDNLVHIAHNVKIGAGSAIAGCVGIAGSAVIGKNCTVAGMVAINGHITIADNTHFHGGTIVTKGVKESGAYASAPPMQEVSKWRRNAVRYGQLDEWVEKIKALQKAQKD.

Histidine 241 functions as the Proton acceptor in the catalytic mechanism.

This sequence belongs to the transferase hexapeptide repeat family. LpxD subfamily. Homotrimer.

It catalyses the reaction a UDP-3-O-[(3R)-3-hydroxyacyl]-alpha-D-glucosamine + a (3R)-hydroxyacyl-[ACP] = a UDP-2-N,3-O-bis[(3R)-3-hydroxyacyl]-alpha-D-glucosamine + holo-[ACP] + H(+). Its pathway is bacterial outer membrane biogenesis; LPS lipid A biosynthesis. In terms of biological role, catalyzes the N-acylation of UDP-3-O-acylglucosamine using 3-hydroxyacyl-ACP as the acyl donor. Is involved in the biosynthesis of lipid A, a phosphorylated glycolipid that anchors the lipopolysaccharide to the outer membrane of the cell. The chain is UDP-3-O-acylglucosamine N-acyltransferase from Saccharophagus degradans (strain 2-40 / ATCC 43961 / DSM 17024).